A 180-amino-acid polypeptide reads, in one-letter code: Large ribosomal subunit protein uL18m (180 aa).

This sequence belongs to the universal ribosomal protein uL18 family. In terms of assembly, component of the mitochondrial ribosome large subunit (39S) which comprises a 16S rRNA and about 50 distinct proteins.

It localises to the mitochondrion. Together with thiosulfate sulfurtransferase (TST), acts as a mitochondrial import factor for the cytosolic 5S rRNA. The precursor form shows RNA chaperone activity; is able to fold the 5S rRNA into an import-competent conformation that is recognized by rhodanese (TST). Both the cytoplasmic and mitochondrial forms are able to bind to the helix IV-loop D in the gamma domain of the 5S rRNA. The polypeptide is Large ribosomal subunit protein uL18m (MRPL18) (Bos taurus (Bovine)).